Reading from the N-terminus, the 206-residue chain is Uridine kinase (206 aa).

11-18 contributes to the ATP binding site; the sequence is GGSASGKT.

The protein belongs to the uridine kinase family.

It is found in the cytoplasm. The catalysed reaction is uridine + ATP = UMP + ADP + H(+). It catalyses the reaction cytidine + ATP = CMP + ADP + H(+). The protein operates within pyrimidine metabolism; CTP biosynthesis via salvage pathway; CTP from cytidine: step 1/3. Its pathway is pyrimidine metabolism; UMP biosynthesis via salvage pathway; UMP from uridine: step 1/1. This chain is Uridine kinase, found in Lactococcus lactis subsp. lactis (strain IL1403) (Streptococcus lactis).